Reading from the N-terminus, the 662-residue chain is Glycogen debranching enzyme (662 aa).

The active-site Nucleophile is D338. The active-site Proton donor is the E373.

Belongs to the glycosyl hydrolase 13 family.

It carries out the reaction Hydrolysis of (1-&gt;6)-alpha-D-glucosidic linkages to branches with degrees of polymerization of three or four glucose residues in limit dextrin.. It functions in the pathway glycan degradation; glycogen degradation. Its function is as follows. Removes maltotriose and maltotetraose chains that are attached by 1,6-alpha-linkage to the limit dextrin main chain, generating a debranched limit dextrin. This chain is Glycogen debranching enzyme, found in Yersinia pseudotuberculosis serotype IB (strain PB1/+).